Reading from the N-terminus, the 232-residue chain is Small ribosomal subunit protein uS3 (232 aa).

The KH type-2 domain maps to 39–107; the sequence is IREILHKELK…DVVINIVEIR (69 aa).

The protein belongs to the universal ribosomal protein uS3 family. As to quaternary structure, part of the 30S ribosomal subunit. Forms a tight complex with proteins S10 and S14.

In terms of biological role, binds the lower part of the 30S subunit head. Binds mRNA in the 70S ribosome, positioning it for translation. The sequence is that of Small ribosomal subunit protein uS3 from Rhodopseudomonas palustris (strain HaA2).